The following is a 102-amino-acid chain: Co-chaperonin GroES (102 aa).

This sequence belongs to the GroES chaperonin family. As to quaternary structure, heptamer of 7 subunits arranged in a ring. Interacts with the chaperonin GroEL.

The protein resides in the cytoplasm. Functionally, together with the chaperonin GroEL, plays an essential role in assisting protein folding. The GroEL-GroES system forms a nano-cage that allows encapsulation of the non-native substrate proteins and provides a physical environment optimized to promote and accelerate protein folding. GroES binds to the apical surface of the GroEL ring, thereby capping the opening of the GroEL channel. This is Co-chaperonin GroES from Vibrio harveyi (Beneckea harveyi).